The primary structure comprises 288 residues: MQIINDPTEMQKTAESLRLKHQFIAVVMTMGALHEGHLSLIKLAKERAGSVILTIFVNPRQFGPEEDFQRYPRPLEKDASMARSAGVDYLFAPDPELIYPEAFQTQVSTGDIATRFEGAARPGHFDGMATVVLKLLLLSKAHLAVFGEKDAQQLAVIKQMVRDFNIDTTILGAPTVRESDGLAISSRNIYLSSEERKQATVLNESMCRARELLHMKQTDCKLIIEEVTKVIASAPDAIIDYATIVDESNFRETAILKPDINYLLLLAVKIGSTRLIDNGVLRVSQQDV.

30–37 (MGALHEGH) contacts ATP. The active-site Proton donor is His-37. Gln-61 provides a ligand contact to (R)-pantoate. Gln-61 serves as a coordination point for beta-alanine. Position 147–150 (147–150 (GEKD)) interacts with ATP. Gln-153 provides a ligand contact to (R)-pantoate. Residues Val-176 and 184–187 (ISSR) each bind ATP.

The protein belongs to the pantothenate synthetase family. As to quaternary structure, homodimer.

It is found in the cytoplasm. The enzyme catalyses (R)-pantoate + beta-alanine + ATP = (R)-pantothenate + AMP + diphosphate + H(+). Its pathway is cofactor biosynthesis; (R)-pantothenate biosynthesis; (R)-pantothenate from (R)-pantoate and beta-alanine: step 1/1. Its function is as follows. Catalyzes the condensation of pantoate with beta-alanine in an ATP-dependent reaction via a pantoyl-adenylate intermediate. The protein is Pantothenate synthetase of Chlorobium phaeobacteroides (strain BS1).